The following is a 706-amino-acid chain: Choline transporter-like protein 2 (706 aa).

The Cytoplasmic portion of the chain corresponds to 1-33; the sequence is MGKEQQLYYGKHGTPQKYDPAFRGPIYNRGCTD. Phosphothreonine is present on Thr14. A helical membrane pass occupies residues 34–54; the sequence is IICCVFLFLAIVGYVAVGIIA. At 55-232 the chain is on the extracellular side; it reads WTHGDPRKVI…RIFEDYTVSW (178 aa). Asn187 and Asn200 each carry an N-linked (GlcNAc...) asparagine glycan. The helical transmembrane segment at 233–253 threads the bilayer; it reads YWIIIGLIIAMVLSLLFIILL. The Cytoplasmic portion of the chain corresponds to 254 to 256; the sequence is RFL. Residues 257 to 277 form a helical membrane-spanning segment; that stretch reads AGIMVWVMIVMVILVLGYGIL. Residues 278–315 lie on the Extracellular side of the membrane; sequence HCYMEYARLRGEAGSDVSLVDLGFQTDFRVYLHLRQTW. The chain crosses the membrane as a helical span at residues 316 to 336; the sequence is VAFMIILSIVEVIIILLLIFL. The Cytoplasmic segment spans residues 337 to 364; the sequence is RKRILIAIALIKEASRAVGYVMCSLLYP. Residues 365–385 traverse the membrane as a helical segment; sequence LVTFFLLCLCIAYWASTAIFL. Residues 386–457 lie on the Extracellular side of the membrane; the sequence is STSNEAVYKI…FNVFMFFWLA (72 aa). Asn397 and Asn417 each carry an N-linked (GlcNAc...) asparagine glycan. A helical transmembrane segment spans residues 458–480; it reads NFVLALGQVTLAGAFASYYWAMN. At 481–504 the chain is on the cytoplasmic side; sequence KPDDLPAFPLFSAFGRALRYHTGS. The chain crosses the membrane as a helical span at residues 505–525; the sequence is LAFGSLLLAIVQVIRVILEYL. The Extracellular portion of the chain corresponds to 526 to 563; the sequence is DQRLKAAENKFAKFLMSCLKCCFWCLEKFIKFLNRNAY. A helical membrane pass occupies residues 564–584; that stretch reads IMIAIYGTNFCTSARNAFFLL. The Cytoplasmic portion of the chain corresponds to 585–599; the sequence is MRNIIRVAVLDKVTD. The chain crosses the membrane as a helical span at residues 600 to 620; it reads FLFLLGKLLIVGSVGILAFFF. The Extracellular portion of the chain corresponds to 621–638; that stretch reads FTHRIRIVQDTAPSLNYY. A helical membrane pass occupies residues 639 to 659; that stretch reads WVPVVTVVIGSYLIAHGFFSV. The Cytoplasmic segment spans residues 660–706; the sequence is YGMCVDTLFLCFLEDLERNDGTPERPYFMSLTLKKILNKTNKRQAEA.

The protein belongs to the CTL (choline transporter-like) family. In terms of assembly, interacts with COCH. In terms of processing, N-glycosylated.

It localises to the cell membrane. The protein resides in the mitochondrion outer membrane. The enzyme catalyses choline(out) + n H(+)(in) = choline(in) + n H(+)(out). The catalysed reaction is ethanolamine(out) + n H(+)(in) = ethanolamine(in) + n H(+)(out). Its function is as follows. Choline/H+ antiporter, mainly in mitochodria. Also acts as a low-affinity ethanolamine/H+ antiporter, regulating the supply of extracellular ethanolamine (Etn) for the CDP-Etn pathway, redistribute intracellular Etn and balance the CDP-Cho and CDP-Etn arms of the Kennedy pathway. The sequence is that of Choline transporter-like protein 2 (SLC44A2) from Bos taurus (Bovine).